The sequence spans 894 residues: Alanine--tRNA ligase (894 aa).

4 residues coordinate Zn(2+): His587, His591, Cys691, and His695. The disordered stretch occupies residues 739-758 (AEGDRAAEEAKGRLQEERDA).

It belongs to the class-II aminoacyl-tRNA synthetase family. The cofactor is Zn(2+).

It localises to the cytoplasm. It catalyses the reaction tRNA(Ala) + L-alanine + ATP = L-alanyl-tRNA(Ala) + AMP + diphosphate. Functionally, catalyzes the attachment of alanine to tRNA(Ala) in a two-step reaction: alanine is first activated by ATP to form Ala-AMP and then transferred to the acceptor end of tRNA(Ala). Also edits incorrectly charged Ser-tRNA(Ala) and Gly-tRNA(Ala) via its editing domain. The chain is Alanine--tRNA ligase from Cenarchaeum symbiosum (strain A).